A 340-amino-acid chain; its full sequence is Zinc finger protein 367 (340 aa).

Residues 101–140 (GAPQSSASVAAVSGGEDEEEASSPDSGHLKDGIRRGRPRA) are disordered. A compositionally biased stretch (basic and acidic residues) spans 127 to 140 (GHLKDGIRRGRPRA). 2 consecutive C2H2-type zinc fingers follow at residues 157–179 (IRCN…KRTH) and 185–209 (YLCD…QRLH). The tract at residues 280–317 (KGKLVQKADQEQQDPLEYLQSDEEDDEKSGAQRRLQEQ) is disordered. Residues 299-332 (QSDEEDDEKSGAQRRLQEQRERLHGALALIELAN) adopt a coiled-coil conformation. The residue at position 300 (Ser-300) is a Phosphoserine. Residues 307 to 317 (KSGAQRRLQEQ) show a composition bias toward basic and acidic residues.

This sequence belongs to the krueppel C2H2-type zinc-finger protein family. Expressed in bone marrow and ovary.

The protein localises to the nucleus. Its function is as follows. Transcriptional activator. Isoform 1 may be involved in transcriptional activation of erythroid genes. The chain is Zinc finger protein 367 (Znf367) from Mus musculus (Mouse).